Here is a 226-residue protein sequence, read N- to C-terminus: Gap junction beta-2 protein (226 aa).

Residues 2–13 (DWGALQTILGGV) lie within the membrane without spanning it. Topologically, residues 14-20 (NKHSTSI) are cytoplasmic. Residues 21–40 (GKIWLTVLFIFRIMILVVAA) traverse the membrane as a helical segment. Residues 41-73 (KEVWGDEQADFVCNTLQPGCKNVCYDHYFPISH) are Extracellular-facing. Residues glutamate 42, glycine 45, and glutamate 47 each coordinate Ca(2+). Disulfide bonds link cysteine 53-cysteine 180, cysteine 60-cysteine 174, and cysteine 64-cysteine 169. A helical membrane pass occupies residues 74-94 (IRLWALQLIFVSTPALLVAMH). Residues 95 to 135 (VAYRRHEKKRKFIKGEIKSEFKDIEEIKTQKVRIEGSLWWT) lie on the Cytoplasmic side of the membrane. The chain crosses the membrane as a helical span at residues 136–156 (YTSSIFFRVIFEAAFMYVFYV). The Extracellular segment spans residues 157-189 (MYDGFSMQRLVKCNAWPCPNTVDCFVSRPTEKT). The helical transmembrane segment at 190–210 (VFTVFMIAVSGICILLNVTEL) threads the bilayer. Residues 211–226 (CYLLIRYCSGRSKKPV) are Cytoplasmic-facing.

This sequence belongs to the connexin family. Beta-type (group I) subfamily. A hemichannel or connexon is composed of a hexamer of connexins. A functional gap junction is formed by the apposition of two hemichannels. Forms heteromeric channels with GJB4. Interacts with CNST.

It localises to the cell membrane. Its subcellular location is the cell junction. The protein localises to the gap junction. Structural component of gap junctions. Gap junctions are dodecameric channels that connect the cytoplasm of adjoining cells. They are formed by the docking of two hexameric hemichannels, one from each cell membrane. Small molecules and ions diffuse from one cell to a neighboring cell via the central pore. This is Gap junction beta-2 protein (GJB2) from Pongo pygmaeus (Bornean orangutan).